A 375-amino-acid polypeptide reads, in one-letter code: tRNA-specific 2-thiouridylase MnmA (375 aa).

ATP contacts are provided by residues 12–19 (GMSGGVDS) and Met-38. An interaction with target base in tRNA region spans residues 98–100 (NPD). Cys-103 functions as the Nucleophile in the catalytic mechanism. A disulfide bridge links Cys-103 with Cys-200. Gly-127 is an ATP binding site. Residues 150–152 (KDQ) are interaction with tRNA. Cys-200 (cysteine persulfide intermediate) is an active-site residue. The interaction with tRNA stretch occupies residues 312–313 (RY).

It belongs to the MnmA/TRMU family.

The protein localises to the cytoplasm. The catalysed reaction is S-sulfanyl-L-cysteinyl-[protein] + uridine(34) in tRNA + AH2 + ATP = 2-thiouridine(34) in tRNA + L-cysteinyl-[protein] + A + AMP + diphosphate + H(+). In terms of biological role, catalyzes the 2-thiolation of uridine at the wobble position (U34) of tRNA, leading to the formation of s(2)U34. The protein is tRNA-specific 2-thiouridylase MnmA of Lactobacillus gasseri (strain ATCC 33323 / DSM 20243 / BCRC 14619 / CIP 102991 / JCM 1131 / KCTC 3163 / NCIMB 11718 / NCTC 13722 / AM63).